A 593-amino-acid polypeptide reads, in one-letter code: Cysteine/serine-rich nuclear protein 1 (593 aa).

Disordered regions lie at residues 1–66 (MTGL…RDFC), 313–392 (FREL…GVDD), and 478–497 (REGS…GQSS). Composition is skewed to low complexity over residues 17-46 (SSVS…VSRA) and 351-372 (SCSS…TSGA).

This sequence belongs to the AXUD1 family.

It localises to the nucleus. In terms of biological role, binds to the consensus sequence 5'-AGAGTG-3' and has transcriptional activator activity. May have a tumor-suppressor function. May play a role in apoptosis. This Pongo abelii (Sumatran orangutan) protein is Cysteine/serine-rich nuclear protein 1 (CSRNP1).